We begin with the raw amino-acid sequence, 234 residues long: Large ribosomal subunit protein uL1 (234 aa).

Belongs to the universal ribosomal protein uL1 family. Part of the 50S ribosomal subunit.

Its function is as follows. Binds directly to 23S rRNA. The L1 stalk is quite mobile in the ribosome, and is involved in E site tRNA release. In terms of biological role, protein L1 is also a translational repressor protein, it controls the translation of the L11 operon by binding to its mRNA. Functionally, peptides originating from the N-terminal end of L1 have antibacterial activity against bacteria such as E.coli and B.megaterium and modest antifungal activities. Has no effect on H.pylori itself. Peptides are not hemolytic against mammalian cells. These peptides may be released in the stomach during altruistic lysis to kill other fast growing bacteria. This Helicobacter pylori (strain ATCC 700392 / 26695) (Campylobacter pylori) protein is Large ribosomal subunit protein uL1.